The chain runs to 309 residues: ATP synthase gamma chain (309 aa).

It belongs to the ATPase gamma chain family. In terms of assembly, F-type ATPases have 2 components, CF(1) - the catalytic core - and CF(0) - the membrane proton channel. CF(1) has five subunits: alpha(3), beta(3), gamma(1), delta(1), epsilon(1). CF(0) has three main subunits: a, b and c.

The protein resides in the cell membrane. In terms of biological role, produces ATP from ADP in the presence of a proton gradient across the membrane. The gamma chain is believed to be important in regulating ATPase activity and the flow of protons through the CF(0) complex. The sequence is that of ATP synthase gamma chain from Mycolicibacterium vanbaalenii (strain DSM 7251 / JCM 13017 / BCRC 16820 / KCTC 9966 / NRRL B-24157 / PYR-1) (Mycobacterium vanbaalenii).